The primary structure comprises 462 residues: Mitochondrial-processing peptidase subunit beta (462 aa).

Residues 1 to 20 (MFSRTASKFRNTRRLLSTIS) constitute a mitochondrion transit peptide. Zn(2+) is bound at residue His70. Glu73 acts as the Proton acceptor in catalysis. Zn(2+) is bound by residues His74 and Glu150. Ser243 is subject to Phosphoserine.

This sequence belongs to the peptidase M16 family. Heterodimer of MAS2 (alpha) and MAS1 (beta) subunits, forming the mitochondrial processing protease (MPP) in which MAS2 is involved in substrate recognition and binding and MAS1 is the catalytic subunit. Requires Zn(2+) as cofactor.

It is found in the mitochondrion matrix. The catalysed reaction is Release of N-terminal transit peptides from precursor proteins imported into the mitochondrion, typically with Arg in position P2.. Binding to MAS2 is required for catalytic activity. Inhibited by high levels (&gt; 1uM) of zinc. Inhibited by metal chelators ethylenediaminetetraacetic acid (EDTA) and O-phenanthroline. Its function is as follows. Catalytic subunit of the essential mitochondrial processing protease (MPP), which cleaves the mitochondrial sequence off newly imported precursors proteins. Preferentially, cleaves after an arginine at position P2. The sequence is that of Mitochondrial-processing peptidase subunit beta from Saccharomyces cerevisiae (strain ATCC 204508 / S288c) (Baker's yeast).